The sequence spans 466 residues: ATP synthase subunit beta (466 aa).

152–159 (GGAGVGKT) serves as a coordination point for ATP.

Belongs to the ATPase alpha/beta chains family. In terms of assembly, F-type ATPases have 2 components, CF(1) - the catalytic core - and CF(0) - the membrane proton channel. CF(1) has five subunits: alpha(3), beta(3), gamma(1), delta(1), epsilon(1). CF(0) has three main subunits: a(1), b(2) and c(9-12). The alpha and beta chains form an alternating ring which encloses part of the gamma chain. CF(1) is attached to CF(0) by a central stalk formed by the gamma and epsilon chains, while a peripheral stalk is formed by the delta and b chains.

Its subcellular location is the cell inner membrane. It catalyses the reaction ATP + H2O + 4 H(+)(in) = ADP + phosphate + 5 H(+)(out). Produces ATP from ADP in the presence of a proton gradient across the membrane. The catalytic sites are hosted primarily by the beta subunits. This is ATP synthase subunit beta from Helicobacter acinonychis (strain Sheeba).